We begin with the raw amino-acid sequence, 116 residues long: Helper of Tim protein 13 (116 aa).

Residues 10 to 94 (TVDDQSRCVH…SNLICPNCRS (85 aa)) form a CHY-type; degenerate zinc finger. Zn(2+)-binding residues include C17, H19, C40, C43, C68, C71, C89, and C92.

In terms of assembly, interacts with the small Tim proteins TIM8, TIM9, TIM10, TIM12, and TIM13.

Its subcellular location is the mitochondrion intermembrane space. The protein resides in the mitochondrion membrane. Functionally, required for the assembly or recycling of the small Tim proteins in the mitochondrial intermembrane, thereby participating in the import and insertion of multi-pass transmembrane proteins into the mitochondrial inner membrane. Probably acts by facilitating the formation of disulfide bonds in small Tim proteins. This is Helper of Tim protein 13 (HOT13) from Saccharomyces cerevisiae (strain ATCC 204508 / S288c) (Baker's yeast).